The following is a 406-amino-acid chain: Succinylornithine transaminase (406 aa).

An N6-(pyridoxal phosphate)lysine modification is found at K252.

This sequence belongs to the class-III pyridoxal-phosphate-dependent aminotransferase family. AstC subfamily. The cofactor is pyridoxal 5'-phosphate.

The enzyme catalyses N(2)-succinyl-L-ornithine + 2-oxoglutarate = N-succinyl-L-glutamate 5-semialdehyde + L-glutamate. It participates in amino-acid degradation; L-arginine degradation via AST pathway; L-glutamate and succinate from L-arginine: step 3/5. In terms of biological role, catalyzes the transamination of N(2)-succinylornithine and alpha-ketoglutarate into N(2)-succinylglutamate semialdehyde and glutamate. Can also act as an acetylornithine aminotransferase. This is Succinylornithine transaminase from Escherichia coli (strain 55989 / EAEC).